A 355-amino-acid polypeptide reads, in one-letter code: Guanine nucleotide-binding protein G(i) subunit alpha-2 (355 aa).

Gly2 is lipidated: N-myristoyl glycine. A lipid anchor (S-palmitoyl cysteine) is attached at Cys3. A G-alpha domain is found at 32–355 (REVKLLLLGA…KNNLKDCGLF (324 aa)). A G1 motif region spans residues 35–48 (KLLLLGAGESGKST). Residues 40 to 47 (GAGESGKS), 176 to 182 (LRTRVKT), 201 to 205 (DVGGQ), 270 to 273 (NKKD), and Ala327 each bind GTP. Residues Ser47 and Thr182 each contribute to the Mg(2+) site. The tract at residues 174-182 (DVLRTRVKT) is G2 motif. Positions 197–206 (FKMFDVGGQR) are G3 motif. The segment at 266 to 273 (ILFLNKKD) is G4 motif. A G5 motif region spans residues 325 to 330 (TCATDT).

It belongs to the G-alpha family. G(i/o/t/z) subfamily. In terms of assembly, g proteins are composed of 3 units; alpha, beta and gamma. The alpha chain contains the guanine nucleotide binding site.

It is found in the cytoplasm. It localises to the cytoskeleton. The protein resides in the microtubule organizing center. The protein localises to the centrosome. Its subcellular location is the cell membrane. In terms of biological role, guanine nucleotide-binding proteins (G proteins) are involved as modulators or transducers in various transmembrane signaling systems. The G(i) proteins are involved in hormonal regulation of adenylate cyclase: they inhibit the cyclase in response to beta-adrenergic stimuli. May play a role in cell division. The polypeptide is Guanine nucleotide-binding protein G(i) subunit alpha-2 (GNAI2) (Gallus gallus (Chicken)).